Reading from the N-terminus, the 558-residue chain is uncharacterized protein (558 aa).

The 200-residue stretch at 7 to 206 (SNFIDMLRLG…FACFLEGMLS (200 aa)) folds into the DhaL domain.

This is an uncharacterized protein from Mycoplasma pneumoniae (strain ATCC 29342 / M129 / Subtype 1) (Mycoplasmoides pneumoniae).